Reading from the N-terminus, the 407-residue chain is Tryptophan synthase beta chain (407 aa).

An N6-(pyridoxal phosphate)lysine modification is found at Lys91.

It belongs to the TrpB family. In terms of assembly, tetramer of two alpha and two beta chains. The cofactor is pyridoxal 5'-phosphate.

It carries out the reaction (1S,2R)-1-C-(indol-3-yl)glycerol 3-phosphate + L-serine = D-glyceraldehyde 3-phosphate + L-tryptophan + H2O. The protein operates within amino-acid biosynthesis; L-tryptophan biosynthesis; L-tryptophan from chorismate: step 5/5. Its function is as follows. The beta subunit is responsible for the synthesis of L-tryptophan from indole and L-serine. This Streptococcus pneumoniae (strain JJA) protein is Tryptophan synthase beta chain.